The following is a 1070-amino-acid chain: MAKKKKQIHLNIIDFQKYYQTDDLLLDTSISTEKKTVDNQKFIRKNRTLEKDEVVQNIDWRTFDNEKEKETNNENTSNVNKIKSPGLEKKNFKKSNDVITLGARNKNKSTNLNADDIDFTNLRNKKKEDDIDFTNLRNKKKEDDLDFSNLRNKKKEEEDVDFSNLRNKKKEDDVDFSNVRNKKKEDDLDFSNVRNKKKEDDVNFSDVRNKKKEDDLDFSNVRNKKKEDDVNFSDVRNKKKEDDLDFSNVRNKKKEDDVNFSDVRNKKKEDALDFSNVRNKKKEDDLDFSNVRNKNKEDDMDFSNVRNKKKEDDLDFSNVRNKKKEDDLDFSNVRNKKKEDDLNFSNVRNKKKEDDLDFSNVRNKNKEDDMDFSNVRNKKKEDDMDFSNVRNKKKEDDLDFSNVRNKKKEDDLDFSNVRNKKKEDDLDFSNLRNKKKEESKENDTNKSEKPLYLRRLEEYRKKKKLESQANDTAMKMHEKEQIDDIQERKEEIKEEFKEEVKEEIKEIKEEIKEVKEEIKEEIKEEIKEVKEEIKEEIKEEIKEVKEEIKEVKEEIKEVKEEIKEVKEEIKEEIKEVKEEIKEEIKEEIKEVKEEIKEEVKEEIKEVKEEIKEVKEEIKEEVKEEIKEVKEEIKEVKEEIKEEIKEVKEEIKEEVKEEIKEEIKEIKEELKNDISSETTKEEKNTEHKKEETEKKKFIPKRVIMYQQELKEKEERNLKLLEQQRKEREMRLQLIRSKTQGTSSTFIPSAKLKHLESLKEEKKKEVKTNIQPKDNNNNNNNNNNNNNNIAVLKNNKNEEQNVIKKKSIFLEIAEKTENAKIVEKTDIEEIAKKKREELYKKQLEKITKKNEEHLKYNNIYKHDVNIIKNFYNEIKDKIIQNYYFNQDDCISLCSILKTDDCNYMESHVPFYVVISIFMLSLPQKLQNDDYFKRASNIKNLLIYLKENSKIENHEDYILNDTLKFCDQLKYPHLSEETSLIETIFDTLLYSGVISKNSFIQWFQDDDSNAELKSKAMLQLIYWHKWLTEEEKDQEEEIDELDDTEEKNISDVSDIEKNVPKNFIFKKIKKKLF.

Disordered stretches follow at residues 66–88, 355–388, 423–483, 667–692, and 735–786; these read EKEK…PGLE, DLDF…DFSN, EDDL…EQID, EELK…EETE, and SKTQ…NNNN. Residues 73 to 83 are compositionally biased toward low complexity; the sequence is NENTSNVNKIK. Composition is skewed to basic and acidic residues over residues 435–460 and 474–483; these read KKEE…EEYR and MKMHEKEQID. Residues 475 to 736 adopt a coiled-coil conformation; that stretch reads KMHEKEQIDD…EMRLQLIRSK (262 aa). Over residues 735–745 the composition is skewed to polar residues; it reads SKTQGTSSTFI. The segment covering 751 to 765 has biased composition (basic and acidic residues); that stretch reads KHLESLKEEKKKEVK. Residues 773 to 786 are compositionally biased toward low complexity; that stretch reads NNNNNNNNNNNNNN.

This is an uncharacterized protein from Plasmodium falciparum (isolate 3D7).